A 34-amino-acid chain; its full sequence is Photosystem II reaction center protein M (34 aa).

A helical membrane pass occupies residues 5-25 (ILAVIATALFVLIPTAFLLIL).

It belongs to the PsbM family. In terms of assembly, PSII is composed of 1 copy each of membrane proteins PsbA, PsbB, PsbC, PsbD, PsbE, PsbF, PsbH, PsbI, PsbJ, PsbK, PsbL, PsbM, PsbT, PsbX, PsbY, PsbZ, Psb30/Ycf12, at least 3 peripheral proteins of the oxygen-evolving complex and a large number of cofactors. It forms dimeric complexes.

The protein resides in the plastid. Its subcellular location is the chloroplast thylakoid membrane. In terms of biological role, one of the components of the core complex of photosystem II (PSII). PSII is a light-driven water:plastoquinone oxidoreductase that uses light energy to abstract electrons from H(2)O, generating O(2) and a proton gradient subsequently used for ATP formation. It consists of a core antenna complex that captures photons, and an electron transfer chain that converts photonic excitation into a charge separation. This subunit is found at the monomer-monomer interface. This Chaetosphaeridium globosum (Charophycean green alga) protein is Photosystem II reaction center protein M.